A 697-amino-acid polypeptide reads, in one-letter code: Probable translocation protein y4yR (697 aa).

8 helical membrane passes run 20–40 (VALMLLLAVSMMVMPIPVMAV), 42–62 (ALIGFNMGLAVLLLMAALYVS), 67–87 (FSSLPGVILLSTVFRLALTVA), 107–127 (SFVISGNIVVGFVIFLVVTMV), 200–220 (SIAGLVVICINMLGGISIGLL), 235–255 (LLTIGDALISQIPALLLSITA), 293–313 (VAMGFVPGFPLPVFFMLAAVF), and 372–392 (IARISQLVSADLGIIVPPIPV). Positions 675-697 (IRLPPSNGTSGEPRSIRPSATTG) are disordered. Residues 680 to 697 (SNGTSGEPRSIRPSATTG) show a composition bias toward polar residues.

This sequence belongs to the FHIPEP (flagella/HR/invasion proteins export pore) family.

It is found in the cell inner membrane. Functionally, could be involved in the secretion of an unknown factor. The protein is Probable translocation protein y4yR of Sinorhizobium fredii (strain NBRC 101917 / NGR234).